A 282-amino-acid polypeptide reads, in one-letter code: MADSNLNVPVIIQATRLDTSVLPRNIFSQSYLLYVIAQGTDVGNVANKANEAGQGAYDAQVRNDEQDVILADHEQRISAAEATLVNHEERIRQAESTLQDHETRIAQNESDISSLDTRVQSLESQVSDHETRIDALEYATTRKKSEVVYSGVSVTIPTAPTNLVSLLKTLTPSSGTLAPFFDTVNNKMVVFNENKTLFFKLSIVGTWPSGTANRSMQLTFSGSVPDTLVSSRNSATTTDNILLATFFSVDKDGFLATNGSTLTIQSNGASFTATTIKIIAEQ.

Positions 2-60 are interaction with tail hub protein; that stretch reads ADSNLNVPVIIQATRLDTSVLPRNIFSQSYLLYVIAQGTDVGNVANKANEAGQGAYDAQ. Trimerization heptad repeat repeat units lie at residues 61-67, 70-76, 77-83, 84-90, 91-97, 98-104, 105-111, 112-118, 119-125, 126-132, and 133-139; these read VRNDEQD, LADHEQR, ISAAEAT, LVNHEER, IRQAEST, LQDHETR, IAQNESD, ISSLDTR, VQSLESQ, VSDHETR, and IDALEYA. Positions 61–139 form a coiled coil; sequence VRNDEQDVIL…ETRIDALEYA (79 aa). A C-terminal globular knob region spans residues 132–282; it reads RIDALEYATT…ATTIKIIAEQ (151 aa). Residues glutamate 146, lysine 200, serine 248, aspartate 250, leucine 255, and lysine 277 each coordinate L-glutamate.

The protein belongs to the Lederbergvirus tail needle protein family. Homotrimer. The trimer forms an elongated coiled-coil (280A x 25A). he N-terminal tip may exist in a pre-ejection extended conformation, which may fold into a trimer of hairpins only after ejection into the host. Interacts with the tail hub. Interacts with the head-to-tail adapter protein.

It localises to the virion. Functionally, cell-perforating component and plug protein of the phage tail machine. Together with the internal ejection proteins is required for stabilization of the condensed DNA within the capsid by plugging the hole through which the DNA enters. Host cell membrane perforation allows viral DNA ejection. The needle penetrates the host outer membrane. The needle is released and the internal head protein gp7 is ejected to form an extra-cellular channel. This is Tail needle protein (9) from Shigella phage Sf6 (Shigella flexneri bacteriophage VI).